The chain runs to 86 residues: Protein Tat (86 aa).

Residues 1-24 form an interaction with human CREBBP region; it reads MEPVDPRLEPWKHPGSQPKTACTN. Residues 1–48 are transactivation; the sequence is MEPVDPRLEPWKHPGSQPKTACTNCYCKKCCFHCQVCFITKALGISYG. Zn(2+)-binding residues include cysteine 22, cysteine 25, and cysteine 27. The interval 22–37 is cysteine-rich; it reads CTNCYCKKCCFHCQVC. Lysine 28 carries the N6-acetyllysine; by host PCAF modification. Zn(2+)-binding residues include cysteine 30, histidine 33, cysteine 34, and cysteine 37. Residues 38-48 are core; it reads FITKALGISYG. Residues 48 to 58 show a composition bias toward basic residues; sequence GRKKRRQRRRA. The tract at residues 48–86 is disordered; the sequence is GRKKRRQRRRAPQGSQTHQVSLSKQPTSQSRGDPTGPKE. A Nuclear localization signal, RNA-binding (TAR), and protein transduction motif is present at residues 49–57; sequence RKKRRQRRR. The segment at 49–86 is interaction with the host capping enzyme RNGTT; the sequence is RKKRRQRRRAPQGSQTHQVSLSKQPTSQSRGDPTGPKE. Residues lysine 50 and lysine 51 each carry the N6-acetyllysine; by host EP300 and GCN5L2 modification. Arginine 52 and arginine 53 each carry asymmetric dimethylarginine; by host PRMT6. A compositionally biased stretch (polar residues) spans 60 to 79; sequence QGSQTHQVSLSKQPTSQSRG. Lysine 71 participates in a covalent cross-link: Glycyl lysine isopeptide (Lys-Gly) (interchain with G-Cter in ubiquitin). The Cell attachment site motif lies at 78-80; sequence RGD.

The protein belongs to the lentiviruses Tat family. In terms of assembly, interacts with host CCNT1. Associates with the P-TEFb complex composed at least of Tat, P-TEFb (CDK9 and CCNT1), TAR RNA, RNA Pol II. Recruits the HATs CREBBP, TAF1/TFIID, EP300, PCAF and GCN5L2. Interacts with host KAT5/Tip60; this interaction targets the latter to degradation. Interacts with the host deacetylase SIRT1. Interacts with host capping enzyme RNGTT; this interaction stimulates RNGTT. Binds to host KDR, and to the host integrins ITGAV/ITGB3 and ITGA5/ITGB1. Interacts with host KPNB1/importin beta-1 without previous binding to KPNA1/importin alpha-1. Interacts with EIF2AK2. Interacts with host nucleosome assembly protein NAP1L1; this interaction may be required for the transport of Tat within the nucleus, since the two proteins interact at the nuclear rim. Interacts with host C1QBP/SF2P32; this interaction involves lysine-acetylated Tat. Interacts with the host chemokine receptors CCR2, CCR3 and CXCR4. Interacts with host DPP4/CD26; this interaction may trigger an anti-proliferative effect. Interacts with host LDLR. Interacts with the host extracellular matrix metalloproteinase MMP1. Interacts with host PRMT6; this interaction mediates Tat's methylation. Interacts with, and is ubiquitinated by MDM2/Hdm2. Interacts with host PSMC3 and HTATIP2. Interacts with STAB1; this interaction may overcome SATB1-mediated repression of IL2 and IL2RA (interleukin) in T cells by binding to the same domain than HDAC1. Interacts (when acetylated) with human CDK13, thereby increasing HIV-1 mRNA splicing and promoting the production of the doubly spliced HIV-1 protein Nef. Interacts with host TBP; this interaction modulates the activity of transcriptional pre-initiation complex. Interacts with host RELA. Interacts with host PLSCR1; this interaction negatively regulates Tat transactivation activity by altering its subcellular distribution. Asymmetrical arginine methylation by host PRMT6 seems to diminish the transactivation capacity of Tat and affects the interaction with host CCNT1. In terms of processing, acetylation by EP300, CREBBP, GCN5L2/GCN5 and PCAF regulates the transactivation activity of Tat. EP300-mediated acetylation of Lys-50 promotes dissociation of Tat from the TAR RNA through the competitive binding to PCAF's bromodomain. In addition, the non-acetylated Tat's N-terminus can also interact with PCAF. PCAF-mediated acetylation of Lys-28 enhances Tat's binding to CCNT1. Lys-50 is deacetylated by SIRT1. Post-translationally, polyubiquitination by host MDM2 does not target Tat to degradation, but activates its transactivation function and fosters interaction with CCNT1 and TAR RNA. Phosphorylated by EIF2AK2 on serine and threonine residues adjacent to the basic region important for TAR RNA binding and function. Phosphorylation of Tat by EIF2AK2 is dependent on the prior activation of EIF2AK2 by dsRNA.

Its subcellular location is the host nucleus. It localises to the host nucleolus. The protein localises to the host cytoplasm. The protein resides in the secreted. Transcriptional activator that increases RNA Pol II processivity, thereby increasing the level of full-length viral transcripts. Recognizes a hairpin structure at the 5'-LTR of the nascent viral mRNAs referred to as the transactivation responsive RNA element (TAR) and recruits the cyclin T1-CDK9 complex (P-TEFb complex) that will in turn hyperphosphorylate the RNA polymerase II to allow efficient elongation. The CDK9 component of P-TEFb and other Tat-activated kinases hyperphosphorylate the C-terminus of RNA Pol II that becomes stabilized and much more processive. Other factors such as HTATSF1/Tat-SF1, SUPT5H/SPT5, and HTATIP2 are also important for Tat's function. Besides its effect on RNA Pol II processivity, Tat induces chromatin remodeling of proviral genes by recruiting the histone acetyltransferases (HATs) CREBBP, EP300 and PCAF to the chromatin. This also contributes to the increase in proviral transcription rate, especially when the provirus integrates in transcriptionally silent region of the host genome. To ensure maximal activation of the LTR, Tat mediates nuclear translocation of NF-kappa-B by interacting with host RELA. Through its interaction with host TBP, Tat may also modulate transcription initiation. Tat can reactivate a latently infected cell by penetrating in it and transactivating its LTR promoter. In the cytoplasm, Tat is thought to act as a translational activator of HIV-1 mRNAs. In terms of biological role, extracellular circulating Tat can be endocytosed by surrounding uninfected cells via the binding to several surface receptors such as CD26, CXCR4, heparan sulfate proteoglycans (HSPG) or LDLR. Neurons are rarely infected, but they internalize Tat via their LDLR. Through its interaction with nuclear HATs, Tat is potentially able to control the acetylation-dependent cellular gene expression. Modulates the expression of many cellular genes involved in cell survival, proliferation or in coding for cytokines or cytokine receptors. Tat plays a role in T-cell and neurons apoptosis. Tat induced neurotoxicity and apoptosis probably contribute to neuroAIDS. Circulating Tat also acts as a chemokine-like and/or growth factor-like molecule that binds to specific receptors on the surface of the cells, affecting many cellular pathways. In the vascular system, Tat binds to ITGAV/ITGB3 and ITGA5/ITGB1 integrins dimers at the surface of endothelial cells and competes with bFGF for heparin-binding sites, leading to an excess of soluble bFGF. This Human immunodeficiency virus type 1 group M subtype B (isolate PCV12) (HIV-1) protein is Protein Tat.